Consider the following 111-residue polypeptide: Aspartate 1-decarboxylase (111 aa).

Residue S25 is the Schiff-base intermediate with substrate; via pyruvic acid of the active site. S25 is modified (pyruvic acid (Ser)). T57 is a binding site for substrate. Residue Y58 is the Proton donor of the active site. A substrate-binding site is contributed by G73 to A75.

Belongs to the PanD family. As to quaternary structure, heterooctamer of four alpha and four beta subunits. It depends on pyruvate as a cofactor. Post-translationally, is synthesized initially as an inactive proenzyme, which is activated by self-cleavage at a specific serine bond to produce a beta-subunit with a hydroxyl group at its C-terminus and an alpha-subunit with a pyruvoyl group at its N-terminus.

The protein resides in the cytoplasm. It carries out the reaction L-aspartate + H(+) = beta-alanine + CO2. The protein operates within cofactor biosynthesis; (R)-pantothenate biosynthesis; beta-alanine from L-aspartate: step 1/1. Catalyzes the pyruvoyl-dependent decarboxylation of aspartate to produce beta-alanine. This is Aspartate 1-decarboxylase from Francisella tularensis subsp. holarctica (strain LVS).